Consider the following 297-residue polypeptide: CCAAT/enhancer-binding protein beta (297 aa).

Positions 1 to 22 are required for Lys-134 sumoylation; it reads MHRLLAWDAACLPPPPAAFRPM. At Arg-3 the chain carries Asymmetric dimethylarginine; by CARM1. The tract at residues 22 to 105 is required for MYC transcriptional repression; the sequence is MEVANFYYEP…YGAKPSKKPS (84 aa). The residue at position 39 (Lys-39) is an N6-acetyllysine; alternate. Residue Lys-39 is modified to N6-methylated lysine; alternate. 2 positions are modified to N6-acetyllysine; by KAT2A and KAT2B: Lys-99 and Lys-102. An N6-acetyllysine; by KAT2A and KAT2B; alternate modification is found at Lys-103. Residue Lys-103 forms a Glycyl lysine isopeptide (Lys-Gly) (interchain with G-Cter in SUMO2); alternate linkage. Position 105 is a phosphoserine; by RPS6KA1 and PKC/PRKCA (Ser-105). Residue Lys-134 forms a Glycyl lysine isopeptide (Lys-Gly) (interchain with G-Cter in SUMO2); alternate linkage. A Glycyl lysine isopeptide (Lys-Gly) (interchain with G-Cter in SUMO); alternate cross-link involves residue Lys-134. Residue Lys-145 forms a Glycyl lysine isopeptide (Lys-Gly) (interchain with G-Cter in SUMO2) linkage. Residues 172–201 form a disordered region; the sequence is SGSSGSLSTSSSSSPPGTPSPADAKAAPAA. At Thr-180 the chain carries Phosphothreonine; by GSK3-beta. Residues Ser-181 and Ser-182 are each glycosylated (O-linked (GlcNAc) serine). Ser-185 bears the Phosphoserine; by GSK3-beta mark. A Phosphothreonine; by RPS6KA1, CDK2 and MAPK modification is found at Thr-189. Glycyl lysine isopeptide (Lys-Gly) (interchain with G-Cter in SUMO2) cross-links involve residues Lys-212 and Lys-214. In terms of domain architecture, bZIP spans 223-286; sequence SDEYKMRRER…STLRNLFKQL (64 aa). A basic motif region spans residues 227–247; it reads KMRRERNNIAVRKSRDKAKMR. Ser-240 carries the phosphoserine; by PKC/PRKCA modification. A leucine-zipper region spans residues 249-256; sequence LETQHKVL. Ser-277 carries the phosphoserine; by CaMK2 modification. A Glycyl lysine isopeptide (Lys-Gly) (interchain with G-Cter in SUMO2) cross-link involves residue Lys-284.

The protein belongs to the bZIP family. C/EBP subfamily. In terms of assembly, binds DNA as a homodimer and as a heterodimer. Interacts with MYB; within the complex, MYB and CEBPB bind to different promoter regions. Interacts with ATF4. Binds DNA as a heterodimer with ATF4. Can form stable heterodimers with CEBPA, CEBPD, CEBPE and CEBPG. Interacts with SIX1. Isoform 2 and isoform 3 also form heterodimers. Interacts with TRIM28 and PTGES2. Interacts with PRDM16. Interacts with CCDC85B. Forms a complex with THOC5. Interacts with ZNF638; this interaction increases transcriptional activation. Interacts with CIDEA and CIDEC; these interactions increase transcriptional activation of a subset of CEBPB downstream target genes. Interacts with DDIT3/CHOP. Interacts with EP300; recruits EP300 to chromatin. Interacts with RORA; the interaction disrupts interaction with EP300. Interacts (not methylated) with MED23, MED26, SMARCA2, SMARCB1 and SMARCC1. Interacts with KAT2A and KAT2B. Interacts with ATF5; EP300 is required for ATF5 and CEBPB interaction and DNA binding. Interacts with NFE2L1; the heterodimer represses expression of DSPP during odontoblast differentiation. In terms of processing, phosphorylated at Thr-189 by MAPK and CDK2, serves to prime phosphorylation at Thr-180 and Ser-185 by GSK3B and acquire DNA-binding as well as transactivation activities, required to induce adipogenesis. MAPK and CDK2 act sequentially to maintain Thr-189 in the primed phosphorylated state during mitotical cloning expansion and thereby progression of terminal differentiation. Phosphorylation at Ser-105 enhances transactivation activity. Phosphorylation at Ser-277 in response to calcium increases transactivation activity. Phosphorylated at Thr-189 by RPS6KA1. Post-translationally, methylated. Methylation at Arg-3 by CARM1 and at Lys-39 by EHMT2 inhibit transactivation activity. Methylation is probably inhibited by phosphorylation at Thr-189. Sumoylated by polymeric chains of SUMO2 or SUMO3. Sumoylation at Lys-134 is required for inhibition of T-cells proliferation. In adipocytes, sumoylation at Lys-134 by PIAS1 leads to ubiquitination and subsequent proteasomal degradation. Desumoylated by SENP2, which abolishes ubiquitination and stabilizes protein levels. In terms of processing, ubiquitinated, leading to proteasomal degradation. Post-translationally, O-glycosylated, glycosylation at Ser-181 and Ser-182 prevents phosphorylation on Thr-189, Ser-185 and Thr-180 and DNA binding activity which delays the adipocyte differentiation program. Acetylated. Acetylation at Lys-39 is an important and dynamic regulatory event that contributes to its ability to transactivate target genes, including those associated with adipogenesis and adipocyte function. Deacetylation by HDAC1 represses its transactivation activity. Acetylated by KAT2A and KAT2B within a cluster of lysine residues between amino acids 99-103, this acetylation is strongly induced by glucocorticoid treatment and enhances transactivation activity. In terms of tissue distribution, liver and lung.

The protein resides in the nucleus. Its subcellular location is the cytoplasm. Functionally, important transcription factor regulating the expression of genes involved in immune and inflammatory responses. Also plays a significant role in adipogenesis, as well as in the gluconeogenic pathway, liver regeneration, and hematopoiesis. The consensus recognition site is 5'-T[TG]NNGNAA[TG]-3'. Its functional capacity is governed by protein interactions and post-translational protein modifications. During early embryogenesis, plays essential and redundant roles with CEBPA. Has a promitotic effect on many cell types such as hepatocytes and adipocytes but has an antiproliferative effect on T-cells by repressing MYC expression, facilitating differentiation along the T-helper 2 lineage. Binds to regulatory regions of several acute-phase and cytokines genes and plays a role in the regulation of acute-phase reaction and inflammation. Also plays a role in intracellular bacteria killing. During adipogenesis, is rapidly expressed and, after activation by phosphorylation, induces CEBPA and PPARG, which turn on the series of adipocyte genes that give rise to the adipocyte phenotype. The delayed transactivation of the CEBPA and PPARG genes by CEBPB appears necessary to allow mitotic clonal expansion and thereby progression of terminal differentiation. Essential for female reproduction because of a critical role in ovarian follicle development. Restricts osteoclastogenesis: together with NFE2L1; represses expression of DSPP during odontoblast differentiation. Its function is as follows. Essential for gene expression induction in activated macrophages. Plays a major role in immune responses such as CD4(+) T-cell response, granuloma formation and endotoxin shock. Not essential for intracellular bacteria killing. In terms of biological role, acts as a dominant negative through heterodimerization with isoform 2. Promotes osteoblast differentiation and osteoclastogenesis. The chain is CCAAT/enhancer-binding protein beta from Rattus norvegicus (Rat).